The primary structure comprises 287 residues: ATP synthase gamma chain (287 aa).

Belongs to the ATPase gamma chain family. F-type ATPases have 2 components, CF(1) - the catalytic core - and CF(0) - the membrane proton channel. CF(1) has five subunits: alpha(3), beta(3), gamma(1), delta(1), epsilon(1). CF(0) has three main subunits: a, b and c.

It localises to the cell membrane. Its function is as follows. Produces ATP from ADP in the presence of a proton gradient across the membrane. The gamma chain is believed to be important in regulating ATPase activity and the flow of protons through the CF(0) complex. The protein is ATP synthase gamma chain of Mycoplasmopsis agalactiae (strain NCTC 10123 / CIP 59.7 / PG2) (Mycoplasma agalactiae).